The following is a 154-amino-acid chain: Myoglobin (154 aa).

A Globin domain is found at 2 to 148 (GLSDGEWQLV…FRNDIAAKYK (147 aa)). A Phosphoserine modification is found at serine 4. A nitrite-binding site is contributed by histidine 65. Histidine 65 provides a ligand contact to O2. Threonine 68 bears the Phosphothreonine mark. Histidine 94 serves as a coordination point for heme b.

The protein belongs to the globin family. As to quaternary structure, monomeric.

The protein localises to the cytoplasm. The protein resides in the sarcoplasm. The enzyme catalyses Fe(III)-heme b-[protein] + nitric oxide + H2O = Fe(II)-heme b-[protein] + nitrite + 2 H(+). It carries out the reaction H2O2 + AH2 = A + 2 H2O. Functionally, monomeric heme protein which primary function is to store oxygen and facilitate its diffusion within muscle tissues. Reversibly binds oxygen through a pentacoordinated heme iron and enables its timely and efficient release as needed during periods of heightened demand. Depending on the oxidative conditions of tissues and cells, and in addition to its ability to bind oxygen, it also has a nitrite reductase activity whereby it regulates the production of bioactive nitric oxide. Under stress conditions, like hypoxia and anoxia, it also protects cells against reactive oxygen species thanks to its pseudoperoxidase activity. The sequence is that of Myoglobin (MB) from Lutra lutra (European river otter).